The following is a 185-amino-acid chain: Comitin (185 aa).

Residues 1 to 123 form the Bulb-type lectin domain; the sequence is MELLRQGEHL…YKQILYSSKP (123 aa). The disordered stretch occupies residues 138-185; the sequence is SGHPQSAYPPQQPGYGYPAQPGYPPQPGYPPQHGYPPQHGYPQQPGYY. The span at 141–157 shows a compositional bias: low complexity; that stretch reads PQSAYPPQQPGYGYPAQ. A run of 5 repeats spans residues 153–158, 159–164, 165–170, 171–176, and 177–182. A 5 X 6 AA tandem repeats of G-Y-P-X-Q-[PH] region spans residues 153-182; sequence GYPAQPGYPPQPGYPPQHGYPPQHGYPQQP. Pro residues predominate over residues 158-171; the sequence is PGYPPQPGYPPQHG. The segment covering 172 to 185 has biased composition (low complexity); the sequence is YPPQHGYPQQPGYY.

In terms of assembly, homodimer in solution. The N-terminus is blocked.

The protein resides in the golgi apparatus membrane. The protein localises to the endomembrane system. It is found in the cytoplasm. It localises to the cytoskeleton. Functionally, may have a role in cell motility. It has high affinity for both G-actin and F-actin. Binds to vesicle membranes via mannose residues and, by way of its interaction with actin, links these membranes to the cytoskeleton. The protein is Comitin (comA) of Dictyostelium discoideum (Social amoeba).